Here is a 283-residue protein sequence, read N- to C-terminus: MASYPYGQGYHGAAGQPPGAPQTNYYGGQQYGGGVQPAASYGRPAPGAPYGSPPSGGVYGHPVPGSAAPGAPGGPYGGQAPGGPYSVPGSTPYGSQQHGSYGQGAPAGNIPPGVDPEAFSWFQTVDTDHSGYISLKELKQALVNTNWSSFNDETCTMMMNMFDKSNSGRIDMFGFSALWRFIQQWRNLFQQYDRDRSGSINQGELHQALCQMGYQLSPQFVQIVMSRYAQRSAQPGLQLDRFIQICTQLQSMTEAFREKDTGQIGTAKLSYEDFITMTTTRLL.

8 repeat units span residues 21-30, 36-44, 45-54, 55-62, 71-79, 80-87, 88-95, and 96-104. Residues 21-104 are 8 X 9 AA approximate tandem repeat of [AP]-P-G-G-P-Y-G-G-P-P; sequence PQTNYYGGQQ…SQQHGSYGQG (84 aa). Residues 37 to 70 show a composition bias toward low complexity; that stretch reads PAASYGRPAPGAPYGSPPSGGVYGHPVPGSAAPG. Positions 37–113 are disordered; sequence PAASYGRPAP…GAPAGNIPPG (77 aa). The span at 71–81 shows a compositional bias: gly residues; that stretch reads APGGPYGGQAP. The segment covering 93–104 has biased composition (low complexity); the sequence is YGSQQHGSYGQG. EF-hand domains follow at residues 113–148, 154–179, 180–215, 216–252, and 253–282; these read GVDPEAFSWFQTVDTDHSGYISLKELKQALVNTNWS, TCTMMMNMFDKSNSGRIDMFGFSALW, RFIQQWRNLFQQYDRDRSGSINQGELHQALCQMGYQ, LSPQFVQIVMSRYAQRSAQPGLQLDRFIQICTQLQSM, and TEAFREKDTGQIGTAKLSYEDFITMTTTRL. Positions 126, 128, 130, 132, and 137 each coordinate Ca(2+). Ca(2+) contacts are provided by D193, D195, S197, S199, and E204.

Heterodimer; heterodimerizes (via the EF-hand 5) with pdcd6.

The protein localises to the cytoplasm. It localises to the endoplasmic reticulum. The protein resides in the membrane. It is found in the cytoplasmic vesicle. Its subcellular location is the COPII-coated vesicle membrane. Functionally, calcium-binding protein that acts as an adapter that bridges unrelated proteins or stabilizes weak protein-protein complexes in response to calcium. Acts as a negative regulator of ER-Golgi transport. This is Peflin from Xenopus laevis (African clawed frog).